A 341-amino-acid chain; its full sequence is Chorismate synthase (341 aa).

Disordered regions lie at residues 45–64 (LERR…GRQE) and 109–134 (HADD…GRET). Arginine 48 contributes to the NADP(+) binding site. FMN contacts are provided by residues 128–130 (RSS), glycine 280, 295–299 (KPTSS), and arginine 308.

The protein belongs to the chorismate synthase family. As to quaternary structure, homotetramer. FMNH2 serves as cofactor.

It catalyses the reaction 5-O-(1-carboxyvinyl)-3-phosphoshikimate = chorismate + phosphate. It functions in the pathway metabolic intermediate biosynthesis; chorismate biosynthesis; chorismate from D-erythrose 4-phosphate and phosphoenolpyruvate: step 7/7. Its function is as follows. Catalyzes the anti-1,4-elimination of the C-3 phosphate and the C-6 proR hydrogen from 5-enolpyruvylshikimate-3-phosphate (EPSP) to yield chorismate, which is the branch point compound that serves as the starting substrate for the three terminal pathways of aromatic amino acid biosynthesis. This reaction introduces a second double bond into the aromatic ring system. The protein is Chorismate synthase of Bdellovibrio bacteriovorus (strain ATCC 15356 / DSM 50701 / NCIMB 9529 / HD100).